The primary structure comprises 455 residues: Bifunctional protein GlmU (455 aa).

Residues 1–226 form a pyrophosphorylase region; sequence MSLDIVILAA…AMEVQGANDR (226 aa). Residues 8–11, K22, Q73, 78–79, 99–101, G136, E151, N166, and N224 contribute to the UDP-N-acetyl-alpha-D-glucosamine site; these read LAAG, GT, and YGD. Residue D101 coordinates Mg(2+). N224 provides a ligand contact to Mg(2+). Residues 227–247 form a linker region; sequence KQLSELERHYQLREARRLMAG. The tract at residues 248 to 455 is N-acetyltransferase; it reads GVTLRDPARF…WKRPVKIRKD (208 aa). 2 residues coordinate UDP-N-acetyl-alpha-D-glucosamine: R330 and K348. Catalysis depends on H360, which acts as the Proton acceptor. The UDP-N-acetyl-alpha-D-glucosamine site is built by Y363 and N374. Residues A377, 383–384, S402, A420, and R437 contribute to the acetyl-CoA site; that span reads NY.

In the N-terminal section; belongs to the N-acetylglucosamine-1-phosphate uridyltransferase family. This sequence in the C-terminal section; belongs to the transferase hexapeptide repeat family. Homotrimer. The cofactor is Mg(2+).

The protein resides in the cytoplasm. It catalyses the reaction alpha-D-glucosamine 1-phosphate + acetyl-CoA = N-acetyl-alpha-D-glucosamine 1-phosphate + CoA + H(+). The catalysed reaction is N-acetyl-alpha-D-glucosamine 1-phosphate + UTP + H(+) = UDP-N-acetyl-alpha-D-glucosamine + diphosphate. It participates in nucleotide-sugar biosynthesis; UDP-N-acetyl-alpha-D-glucosamine biosynthesis; N-acetyl-alpha-D-glucosamine 1-phosphate from alpha-D-glucosamine 6-phosphate (route II): step 2/2. It functions in the pathway nucleotide-sugar biosynthesis; UDP-N-acetyl-alpha-D-glucosamine biosynthesis; UDP-N-acetyl-alpha-D-glucosamine from N-acetyl-alpha-D-glucosamine 1-phosphate: step 1/1. The protein operates within bacterial outer membrane biogenesis; LPS lipid A biosynthesis. Catalyzes the last two sequential reactions in the de novo biosynthetic pathway for UDP-N-acetylglucosamine (UDP-GlcNAc). The C-terminal domain catalyzes the transfer of acetyl group from acetyl coenzyme A to glucosamine-1-phosphate (GlcN-1-P) to produce N-acetylglucosamine-1-phosphate (GlcNAc-1-P), which is converted into UDP-GlcNAc by the transfer of uridine 5-monophosphate (from uridine 5-triphosphate), a reaction catalyzed by the N-terminal domain. This is Bifunctional protein GlmU from Pseudomonas savastanoi pv. phaseolicola (strain 1448A / Race 6) (Pseudomonas syringae pv. phaseolicola (strain 1448A / Race 6)).